The primary structure comprises 321 residues: Transcription factor ATOH8 (321 aa).

2 disordered regions span residues 59–193 and 203–222; these read GLRD…SSYS and HQDSSASPRKRPGEATAASS. Pro residues predominate over residues 70 to 85; that stretch reads VPVPVPVPVPVAPAVP. Basic and acidic residues predominate over residues 93–109; it reads AGERGGSRAPEVSDARK. Over residues 121 to 132 the composition is skewed to pro residues; the sequence is LPTPPPPPPPAP. Residues 133–143 are compositionally biased toward low complexity; sequence QSQAPGGPEAQ. A compositionally biased stretch (pro residues) spans 160–186; sequence PARPAPSAPPAPPAPPESTVRPAPPTR. The segment at 230–243 is basic motif; degenerate; it reads TRRLLANARERTRV. The 53-residue stretch at 230–282 folds into the bHLH domain; that stretch reads TRRLLANARERTRVHTISAAFEALRKQVPCYSYGQKLSKLAILRIACNYILSL. The interval 244–282 is helix-loop-helix motif; sequence HTISAAFEALRKQVPCYSYGQKLSKLAILRIACNYILSL.

As to quaternary structure, efficient DNA binding requires dimerization with another bHLH protein. Interacts with NEUROG3 and NEUROD1. Interacts with ZFPM2; mediates indirect interaction with GATA4. Forms a heterodimer with TCF3; repress transcription of TCF3 and TCF3/NEUROG3 dimer-induced transactivation of E box-dependent promoters. As to expression, expressed in lung, liver, kidney, heart and pancreas. Expressed in endothel of umbilical vessels.

The protein localises to the nucleus. Its subcellular location is the nucleus speckle. It localises to the cytoplasm. Functionally, transcription factor that binds a palindromic (canonical) core consensus DNA sequence 5'-CANNTG- 3' known as an E-box element, possibly as a heterodimer with other bHLH proteins. Regulates endothelial cell proliferation, migration and tube-like structures formation. Modulates endothelial cell differentiation through NOS3. May be implicated in specification and differentiation of neuronal cell lineages in the brain. May participate in kidney development and may be involved in podocyte differentiation. During early embryonic development is involved in tissue-specific differentiation processes that are dependent on class II bHLH factors and namely modulates the differentiation program initiated by the pro-endocrine factor NEUROG3. During myogenesis, may play a role during the transition of myoblasts from the proliferative phase to the differentiation phase. Positively regulates HAMP transcription in two ways, firstly by acting directly on the HAMP promoter via E-boxes binding and indirectly through increased phosphorylation of SMAD protein complex. Repress NEUROG3-dependent gene activation in a gene-specific manner through at least two mechanisms; requires only either the sequestering of a general partner such as TCF3 through heterodimerization, either also requires binding of the bHLH domain to DNA via a basic motif. In Homo sapiens (Human), this protein is Transcription factor ATOH8.